A 79-amino-acid polypeptide reads, in one-letter code: D-alanyl carrier protein (79 aa).

In terms of domain architecture, Carrier spans 2 to 79 (AEFKEQVLDI…MVIKKLEEIR (78 aa)). At Ser37 the chain carries O-(pantetheine 4'-phosphoryl)serine.

The protein belongs to the DltC family. 4'-phosphopantetheine is transferred from CoA to a specific serine of apo-DCP.

The protein resides in the cytoplasm. It participates in cell wall biogenesis; lipoteichoic acid biosynthesis. In terms of biological role, carrier protein involved in the D-alanylation of lipoteichoic acid (LTA). The loading of thioester-linked D-alanine onto DltC is catalyzed by D-alanine--D-alanyl carrier protein ligase DltA. The DltC-carried D-alanyl group is further transferred to cell membrane phosphatidylglycerol (PG) by forming an ester bond, probably catalyzed by DltD. D-alanylation of LTA plays an important role in modulating the properties of the cell wall in Gram-positive bacteria, influencing the net charge of the cell wall. The protein is D-alanyl carrier protein of Bacillus anthracis (strain CDC 684 / NRRL 3495).